Here is a 188-residue protein sequence, read N- to C-terminus: Augmin complex subunit dgt4 (188 aa).

Positions 141–163 (QREFAQNQEALRSLRTAVDGLEN) form a coiled coil.

In terms of assembly, component of the augmin complex composed of dgt2, dgt3, dgt4, dgt5, dgt6, msd1, msd5 and wac. The complex interacts directly or indirectly with microtubules and is required for centrosome-independent generation of spindle microtubules.

It localises to the cytoplasm. It is found in the cytoskeleton. The protein localises to the spindle. In terms of biological role, as part of the augmin complex, plays a role in centrosome-independent generation of spindle microtubules. The complex is required for mitotic spindle assembly through its involvement in localizing gamma-tubulin to spindle microtubules. The chain is Augmin complex subunit dgt4 from Drosophila melanogaster (Fruit fly).